Reading from the N-terminus, the 688-residue chain is Glycine--tRNA ligase beta subunit (688 aa).

This sequence belongs to the class-II aminoacyl-tRNA synthetase family. In terms of assembly, tetramer of two alpha and two beta subunits.

The protein localises to the cytoplasm. It carries out the reaction tRNA(Gly) + glycine + ATP = glycyl-tRNA(Gly) + AMP + diphosphate. The protein is Glycine--tRNA ligase beta subunit of Histophilus somni (strain 2336) (Haemophilus somnus).